The sequence spans 559 residues: Putative helicase 22 (559 aa).

One can recognise a Helicase ATP-binding domain in the interval 186–347 (VSDVNVIGNG…EIMGLLGKIS (162 aa)). Position 199–206 (199–206 (APTGSGKS)) interacts with ATP. Positions 300-303 (DEAH) match the DEAH box motif. The region spanning 410–552 (TNKQIISKIK…KMNFIENEYN (143 aa)) is the Helicase C-terminal domain.

The protein is Putative helicase 22 (SIFV0022) of Sulfolobus islandicus filamentous virus (isolate Iceland/Hveragerdi) (SIFV).